Here is a 126-residue protein sequence, read N- to C-terminus: Small ribosomal subunit protein uS13 (126 aa).

Residues 94–126 (RNLPVHGQRTHTNARTRKGPRRAIAGKKKAGKK) are disordered.

This sequence belongs to the universal ribosomal protein uS13 family. As to quaternary structure, part of the 30S ribosomal subunit. Forms a loose heterodimer with protein S19. Forms two bridges to the 50S subunit in the 70S ribosome.

Its function is as follows. Located at the top of the head of the 30S subunit, it contacts several helices of the 16S rRNA. In the 70S ribosome it contacts the 23S rRNA (bridge B1a) and protein L5 of the 50S subunit (bridge B1b), connecting the 2 subunits; these bridges are implicated in subunit movement. Contacts the tRNAs in the A and P-sites. The protein is Small ribosomal subunit protein uS13 of Parafrankia sp. (strain EAN1pec).